Reading from the N-terminus, the 505-residue chain is Retinoic acid receptor gamma (505 aa).

2 disordered regions span residues 1 to 57 and 113 to 134; these read MMKF…SSKD and SLSV…PSPP. Basic and acidic residues-rich tracts occupy residues 12-22 and 32-46; these read DGGERPEEEGK and MGKE…KEEA. Positions 52-142 are modulating; it reads MSSSKDRICS…PPPPPRVYKP (91 aa). Residues 115–124 show a composition bias toward polar residues; sequence SVETQSTSSE. 2 NR C4-type zinc fingers span residues 143–163 and 179–203; these read CFVC…CEGC and CHRD…LQKC. Residues 143–208 constitute a DNA-binding region (nuclear receptor); it reads CFVCNDKSSG…RLQKCFEVGM (66 aa). Positions 209–237 are hinge; that stretch reads SKEAVRNDRNKKKKEIKEEVVTDSYEMPP. The region spanning 238-472 is the NR LBD domain; the sequence is EMEALIQKVS…PLIREMLENP (235 aa). The interval 462–505 is disordered; sequence PPLIREMLENPEAFEDDASPPPKSEQKPIKVEEKPGEKTSTKDP. Basic and acidic residues predominate over residues 485–505; that stretch reads SEQKPIKVEEKPGEKTSTKDP.

Belongs to the nuclear hormone receptor family. NR1 subfamily. In terms of assembly, heterodimer; with a RXR molecule. Binds DNA preferentially as a RAR/RXR heterodimer. Isoform Delta-1A and Isoform Delta-1B are most abundant in regenerating limbs, tails, and the anterior half of the lower jaw. Isoform Delta-2 is broadly and uniformly distributed.

The protein resides in the nucleus. Its function is as follows. Receptor for retinoic acid. Retinoic acid receptors bind as heterodimers to their target response elements in response to their ligands, all-trans or 9-cis retinoic acid, and regulate gene expression in various biological processes. The RAR/RXR heterodimers bind to the retinoic acid response elements (RARE) composed of tandem 5'-AGGTCA-3' sites known as DR1-DR5. The sequence is that of Retinoic acid receptor gamma (RARG) from Notophthalmus viridescens (Eastern newt).